The sequence spans 401 residues: Probable acid ceramidase (401 aa).

Positions 1 to 22 (MKPVAISLSLLLLVTLLPGSEQ) are cleaved as a signal peptide. N101, N303, and N371 each carry an N-linked (GlcNAc...) asparagine glycan.

Belongs to the acid ceramidase family.

The enzyme catalyses an N-acyl-sphingoid base + H2O = a sphingoid base + a fatty acid. The catalysed reaction is an N-acylsphing-4-enine + H2O = sphing-4-enine + a fatty acid. It catalyses the reaction an N-acyl-15-methylhexadecasphing-4-enine + H2O = 15-methylhexadecasphing-4-enine + a fatty acid. Functionally, catalyzes the hydrolysis of ceramides into sphingoid base and free fatty acid. C.elegans contain specific sphingoid bases, which are unique or different in structure compared to the sphingoid bases found in other animals. Two examples of these distinctive compounds are: 15-methylhexadecasphinganine and 15-methylhexadecasphing-4-enine. The sequence is that of Probable acid ceramidase from Caenorhabditis elegans.